The sequence spans 481 residues: Glutamyl-tRNA(Gln) amidotransferase subunit A (481 aa).

Active-site charge relay system residues include Lys-76 and Ser-151. Catalysis depends on Ser-175, which acts as the Acyl-ester intermediate.

It belongs to the amidase family. GatA subfamily. As to quaternary structure, heterotrimer of A, B and C subunits.

It carries out the reaction L-glutamyl-tRNA(Gln) + L-glutamine + ATP + H2O = L-glutaminyl-tRNA(Gln) + L-glutamate + ADP + phosphate + H(+). Functionally, allows the formation of correctly charged Gln-tRNA(Gln) through the transamidation of misacylated Glu-tRNA(Gln) in organisms which lack glutaminyl-tRNA synthetase. The reaction takes place in the presence of glutamine and ATP through an activated gamma-phospho-Glu-tRNA(Gln). The polypeptide is Glutamyl-tRNA(Gln) amidotransferase subunit A (Neisseria meningitidis serogroup B (strain ATCC BAA-335 / MC58)).